The chain runs to 303 residues: Recombination-associated protein RdgC (303 aa).

It belongs to the RdgC family.

It is found in the cytoplasm. Its subcellular location is the nucleoid. In terms of biological role, may be involved in recombination. The sequence is that of Recombination-associated protein RdgC from Shewanella loihica (strain ATCC BAA-1088 / PV-4).